We begin with the raw amino-acid sequence, 222 residues long: N-(5'-phosphoribosyl)anthranilate isomerase (222 aa).

Belongs to the TrpF family.

The enzyme catalyses N-(5-phospho-beta-D-ribosyl)anthranilate = 1-(2-carboxyphenylamino)-1-deoxy-D-ribulose 5-phosphate. Its pathway is amino-acid biosynthesis; L-tryptophan biosynthesis; L-tryptophan from chorismate: step 3/5. The protein is N-(5'-phosphoribosyl)anthranilate isomerase of Rhizobium etli (strain ATCC 51251 / DSM 11541 / JCM 21823 / NBRC 15573 / CFN 42).